Consider the following 641-residue polypeptide: Chaperone protein DnaK (641 aa).

Thr199 is modified (phosphothreonine; by autocatalysis). Residues 602-641 are disordered; it reads MYADQADQAQQAGGQEEGQAKSADDAVDAEFEEVKDDDKK. The segment covering 604–615 has biased composition (low complexity); the sequence is ADQADQAQQAGG. Over residues 626–641 the composition is skewed to acidic residues; the sequence is DAVDAEFEEVKDDDKK.

The protein belongs to the heat shock protein 70 family.

In terms of biological role, acts as a chaperone. This chain is Chaperone protein DnaK, found in Marinobacter nauticus (strain ATCC 700491 / DSM 11845 / VT8) (Marinobacter aquaeolei).